A 472-amino-acid polypeptide reads, in one-letter code: 3-isopropylmalate dehydratase large subunit (472 aa).

Positions 347, 407, and 410 each coordinate [4Fe-4S] cluster.

Belongs to the aconitase/IPM isomerase family. LeuC type 1 subfamily. Heterodimer of LeuC and LeuD. The cofactor is [4Fe-4S] cluster.

The catalysed reaction is (2R,3S)-3-isopropylmalate = (2S)-2-isopropylmalate. It functions in the pathway amino-acid biosynthesis; L-leucine biosynthesis; L-leucine from 3-methyl-2-oxobutanoate: step 2/4. Its function is as follows. Catalyzes the isomerization between 2-isopropylmalate and 3-isopropylmalate, via the formation of 2-isopropylmaleate. The chain is 3-isopropylmalate dehydratase large subunit from Opitutus terrae (strain DSM 11246 / JCM 15787 / PB90-1).